A 341-amino-acid chain; its full sequence is UPF0283 membrane protein HD_1769 (341 aa).

3 helical membrane passes run 57–77 (LLAV…QCLI), 86–106 (IDLA…GAII), and 204–224 (ENAI…MIAW).

This sequence belongs to the UPF0283 family.

It is found in the cell inner membrane. In Haemophilus ducreyi (strain 35000HP / ATCC 700724), this protein is UPF0283 membrane protein HD_1769.